A 127-amino-acid polypeptide reads, in one-letter code: Glycine cleavage system H protein (127 aa).

Positions 24–105 constitute a Lipoyl-binding domain; sequence TAVVGITDFA…YNEGWIVKMK (82 aa). Residue lysine 65 is modified to N6-lipoyllysine.

This sequence belongs to the GcvH family. In terms of assembly, the glycine cleavage system is composed of four proteins: P, T, L and H. The cofactor is (R)-lipoate.

In terms of biological role, the glycine cleavage system catalyzes the degradation of glycine. The H protein shuttles the methylamine group of glycine from the P protein to the T protein. The polypeptide is Glycine cleavage system H protein (Chlorobaculum parvum (strain DSM 263 / NCIMB 8327) (Chlorobium vibrioforme subsp. thiosulfatophilum)).